Here is a 344-residue protein sequence, read N- to C-terminus: DNA integrity scanning protein DisA (344 aa).

Positions 1–133 (MALLAPGTPI…GRRYLIERPE (133 aa)) constitute a DAC domain. ATP is bound by residues glycine 61 and 92–96 (TRHRT).

The protein belongs to the DisA family. In terms of assembly, homooctamer. It depends on Mg(2+) as a cofactor.

The catalysed reaction is 2 ATP = 3',3'-c-di-AMP + 2 diphosphate. Its function is as follows. Participates in a DNA-damage check-point. DisA forms globular foci that rapidly scan along the chromosomes searching for lesions. Functionally, also has diadenylate cyclase activity, catalyzing the condensation of 2 ATP molecules into cyclic di-AMP (c-di-AMP). c-di-AMP likely acts as a signaling molecule that may couple DNA integrity with a cellular process. This is DNA integrity scanning protein DisA from Cutibacterium acnes (strain DSM 16379 / KPA171202) (Propionibacterium acnes).